The chain runs to 143 residues: UPF0102 protein Acid345_3985 (143 aa).

Belongs to the UPF0102 family.

This chain is UPF0102 protein Acid345_3985, found in Koribacter versatilis (strain Ellin345).